Reading from the N-terminus, the 250-residue chain is MNVVETSSEMNSNVEKASTPKQENNKRFERKSRPSSRQKVVKDEFEEKVVTIRRVTKVTKGGRHFRFAAVVVVGNKKGLVGMGTGKANEVPEAIKKAIKEAKKNLVSVTLRNTTVPHEVLGTFGAGKILIKPAKVGTGIIAGGPARAVIELSGISDVYAKSLGSNNAINMIRATFEGLSSMQTLKRVQELRYGKTFDKQKVALVEKTAETKNFEKKPPKSTTKKMASKKIEKEDVIAEPMIKNEAENSAE.

A compositionally biased stretch (polar residues) spans 1–22 (MNVVETSSEMNSNVEKASTPKQ). The tract at residues 1–40 (MNVVETSSEMNSNVEKASTPKQENNKRFERKSRPSSRQKV) is disordered. The region spanning 45–108 (FEEKVVTIRR…KEAKKNLVSV (64 aa)) is the S5 DRBM domain.

It belongs to the universal ribosomal protein uS5 family. As to quaternary structure, part of the 30S ribosomal subunit. Contacts proteins S4 and S8.

Its function is as follows. With S4 and S12 plays an important role in translational accuracy. Located at the back of the 30S subunit body where it stabilizes the conformation of the head with respect to the body. This chain is Small ribosomal subunit protein uS5, found in Mycoplasma capricolum subsp. capricolum (strain California kid / ATCC 27343 / NCTC 10154).